Consider the following 814-residue polypeptide: Syn-copalyl diphosphate synthase TPS3, chloroplastic (814 aa).

A chloroplast-targeting transit peptide spans 1–52; sequence MCSLSTLSPNFSNAYGSKSVSSTASRFPCWQRSNETWKTQSREVIHWTYVVR. Position 248 (lysine 248) interacts with substrate. 2 residues coordinate Mg(2+): aspartate 386 and aspartate 388. A DXDD motif motif is present at residues 386-389; sequence DIDD. Lysine 472 is a substrate binding site.

This sequence belongs to the terpene synthase family. It depends on Mg(2+) as a cofactor. Mostly expressed in trichomes of leaves and fruits.

The protein localises to the plastid. Its subcellular location is the chloroplast. It catalyses the reaction (2E,6E,10E)-geranylgeranyl diphosphate = 9alpha-copalyl diphosphate. Its pathway is secondary metabolite biosynthesis; terpenoid biosynthesis. Involved in the biosynthesis of labdane-type diterpenoid including cleroda-dienols, and peregrinol lactones and furan derivatives, dopaminergic diterpenoids that can bind to dopamine receptors in the human pituitary gland, have probably ability to lower prolactin levels, and are used to treat menstrual cycle disorders (e.g. premenstrual syndrome and mastodynia). Terpene synthase that produces syn-copalyl diphosophate from geranylgeranyl diphosphate (GGPP). This Vitex agnus-castus (Chaste tree) protein is Syn-copalyl diphosphate synthase TPS3, chloroplastic.